The sequence spans 309 residues: Acetylglutamate kinase (309 aa).

Substrate contacts are provided by residues Gly82 to Gly83, Arg104, and Asn206.

Belongs to the acetylglutamate kinase family. ArgB subfamily.

The protein localises to the cytoplasm. It catalyses the reaction N-acetyl-L-glutamate + ATP = N-acetyl-L-glutamyl 5-phosphate + ADP. Its pathway is amino-acid biosynthesis; L-arginine biosynthesis; N(2)-acetyl-L-ornithine from L-glutamate: step 2/4. Catalyzes the ATP-dependent phosphorylation of N-acetyl-L-glutamate. This Cupriavidus pinatubonensis (strain JMP 134 / LMG 1197) (Cupriavidus necator (strain JMP 134)) protein is Acetylglutamate kinase.